Reading from the N-terminus, the 344-residue chain is Dihydroorotase (344 aa).

His13 and His15 together coordinate Zn(2+). Residues 15-17 and Asn41 contribute to the substrate site; that span reads HLR. Positions 98, 135, and 173 each coordinate Zn(2+). Residue Lys98 is modified to N6-carboxylysine. His135 provides a ligand contact to substrate. Leu218 lines the substrate pocket. Asp247 is a Zn(2+) binding site. Asp247 is an active-site residue. Residues His251 and Ala263 each coordinate substrate.

Belongs to the metallo-dependent hydrolases superfamily. DHOase family. Class II DHOase subfamily. Homodimer. It depends on Zn(2+) as a cofactor.

The enzyme catalyses (S)-dihydroorotate + H2O = N-carbamoyl-L-aspartate + H(+). Its pathway is pyrimidine metabolism; UMP biosynthesis via de novo pathway; (S)-dihydroorotate from bicarbonate: step 3/3. Functionally, catalyzes the reversible cyclization of carbamoyl aspartate to dihydroorotate. This Neisseria meningitidis serogroup C / serotype 2a (strain ATCC 700532 / DSM 15464 / FAM18) protein is Dihydroorotase.